Here is a 370-residue protein sequence, read N- to C-terminus: MGDRRFIDFQFQDSNSSLRPRLGNATANNTCIVDDSFKYNLNGAVYSVVFILGLITNSVSLFVFCFRMKMRSETAIFITNLAVSDLLFVCTLPFKIFYNFNRHWPFGDTLCKISGTAFLTNIYGSMLFLTCISVDRFLAIVYPFRSRTIRTRRNSAIVCAGVWILVLSGGISASLFSTTNVNNATTTCFEGFSKRVWKTYLSKITIFIEVVGFIIPLILNVSCSSVVLRTLRKPATLSQIGTNKKKVLKMITVHMAVFVVCFVPYNSVLFLYALVRSQAITNCFLERFAKIMYPITLCLATLNCCFDPFIYYFTLESFQKSFYINAHIRMESLFKTETPLTTKPSLPAIQEEVSDQTTNNGGELMLESTF.

The Extracellular segment spans residues 1–43; it reads MGDRRFIDFQFQDSNSSLRPRLGNATANNTCIVDDSFKYNLNG. N-linked (GlcNAc...) asparagine glycosylation is found at Asn-15, Asn-24, and Asn-28. Residues 44–64 form a helical membrane-spanning segment; sequence AVYSVVFILGLITNSVSLFVF. The Cytoplasmic segment spans residues 65–73; the sequence is CFRMKMRSE. Residues 74-94 form a helical membrane-spanning segment; it reads TAIFITNLAVSDLLFVCTLPF. Over 95–112 the chain is Extracellular; sequence KIFYNFNRHWPFGDTLCK. Cys-111 and Cys-188 form a disulfide bridge. Residues 113 to 133 traverse the membrane as a helical segment; the sequence is ISGTAFLTNIYGSMLFLTCIS. Over 134–155 the chain is Cytoplasmic; sequence VDRFLAIVYPFRSRTIRTRRNS. A helical transmembrane segment spans residues 156–176; that stretch reads AIVCAGVWILVLSGGISASLF. Residues 177–203 are Extracellular-facing; it reads STTNVNNATTTCFEGFSKRVWKTYLSK. Asn-183 carries N-linked (GlcNAc...) asparagine glycosylation. Residues 204–224 traverse the membrane as a helical segment; that stretch reads ITIFIEVVGFIIPLILNVSCS. The Cytoplasmic portion of the chain corresponds to 225–254; it reads SVVLRTLRKPATLSQIGTNKKKVLKMITVH. A helical transmembrane segment spans residues 255–275; that stretch reads MAVFVVCFVPYNSVLFLYALV. Topologically, residues 276-294 are extracellular; that stretch reads RSQAITNCFLERFAKIMYP. The helical transmembrane segment at 295–315 threads the bilayer; the sequence is ITLCLATLNCCFDPFIYYFTL. Over 316-370 the chain is Cytoplasmic; the sequence is ESFQKSFYINAHIRMESLFKTETPLTTKPSLPAIQEEVSDQTTNNGGELMLESTF.

Belongs to the G-protein coupled receptor 1 family. High expression in ovary. Not detected in the brain regions thalamus, putamen, caudate, frontal cortex, pons, hypothalamus and hippocampus.

The protein localises to the cell membrane. Receptor for lysophosphatidic acid (LPA), a mediator of diverse cellular activities. Transduces a signal by increasing the intracellular calcium ions and by stimulating adenylyl cyclase activity. The rank order of potency for agonists of this receptor is 1-oleoyl- &gt; 1-stearoyl- &gt; 1-palmitoyl- &gt; 1-myristoyl- &gt; 1-alkyl- &gt; 1-alkenyl-LPA. The chain is Lysophosphatidic acid receptor 4 (LPAR4) from Homo sapiens (Human).